We begin with the raw amino-acid sequence, 117 residues long: Ribonuclease P protein component (117 aa).

It belongs to the RnpA family. Consists of a catalytic RNA component (M1 or rnpB) and a protein subunit.

It carries out the reaction Endonucleolytic cleavage of RNA, removing 5'-extranucleotides from tRNA precursor.. Functionally, RNaseP catalyzes the removal of the 5'-leader sequence from pre-tRNA to produce the mature 5'-terminus. It can also cleave other RNA substrates such as 4.5S RNA. The protein component plays an auxiliary but essential role in vivo by binding to the 5'-leader sequence and broadening the substrate specificity of the ribozyme. The polypeptide is Ribonuclease P protein component (Thermotoga maritima (strain ATCC 43589 / DSM 3109 / JCM 10099 / NBRC 100826 / MSB8)).